A 175-amino-acid chain; its full sequence is ATP synthase subunit b (175 aa).

Residues L14–I34 form a helical membrane-spanning segment.

The protein belongs to the ATPase B chain family. As to quaternary structure, F-type ATPases have 2 components, F(1) - the catalytic core - and F(0) - the membrane proton channel. F(1) has five subunits: alpha(3), beta(3), gamma(1), delta(1), epsilon(1). F(0) has four main subunits: a(1), b(2) and c(10-14). The alpha and beta chains form an alternating ring which encloses part of the gamma chain. F(1) is attached to F(0) by a central stalk formed by the gamma and epsilon chains, while a peripheral stalk is formed by the delta and b chains.

It localises to the cell inner membrane. In terms of biological role, f(1)F(0) ATP synthase produces ATP from ADP in the presence of a proton or sodium gradient. F-type ATPases consist of two structural domains, F(1) containing the extramembraneous catalytic core and F(0) containing the membrane proton channel, linked together by a central stalk and a peripheral stalk. During catalysis, ATP synthesis in the catalytic domain of F(1) is coupled via a rotary mechanism of the central stalk subunits to proton translocation. Its function is as follows. Component of the F(0) channel, it forms part of the peripheral stalk, linking F(1) to F(0). The chain is ATP synthase subunit b from Chlorobaculum tepidum (strain ATCC 49652 / DSM 12025 / NBRC 103806 / TLS) (Chlorobium tepidum).